Here is a 172-residue protein sequence, read N- to C-terminus: Phosphopantetheine adenylyltransferase (172 aa).

T14 contributes to the substrate binding site. Residues 14–15 and H22 each bind ATP; that span reads TF. Positions 46, 78, and 92 each coordinate substrate. ATP contacts are provided by residues 93 to 95, E103, and 128 to 134; these read GLR and WLYISST.

Belongs to the bacterial CoaD family. As to quaternary structure, homohexamer. It depends on Mg(2+) as a cofactor.

The protein localises to the cytoplasm. It catalyses the reaction (R)-4'-phosphopantetheine + ATP + H(+) = 3'-dephospho-CoA + diphosphate. Its pathway is cofactor biosynthesis; coenzyme A biosynthesis; CoA from (R)-pantothenate: step 4/5. Reversibly transfers an adenylyl group from ATP to 4'-phosphopantetheine, yielding dephospho-CoA (dPCoA) and pyrophosphate. In Lawsonia intracellularis (strain PHE/MN1-00), this protein is Phosphopantetheine adenylyltransferase.